The primary structure comprises 169 residues: uncharacterized protein (169 aa).

It localises to the mitochondrion. This is an uncharacterized protein from Marchantia polymorpha (Common liverwort).